The chain runs to 570 residues: Glycine--tRNA ligase (570 aa).

The substrate site is built by Arg-99 and Glu-165. ATP-binding positions include 197-199, 207-212, 324-325, and 443-446; these read RNE, LRLREF, EC, and GIDR. Residue 212–216 coordinates substrate; sequence FSQAE. Residue 439 to 443 coordinates substrate; it reads EPSFG.

It belongs to the class-II aminoacyl-tRNA synthetase family.

The protein localises to the cytoplasm. The catalysed reaction is tRNA(Gly) + glycine + ATP = glycyl-tRNA(Gly) + AMP + diphosphate. Functionally, catalyzes the attachment of glycine to tRNA(Gly). In Thermococcus sibiricus (strain DSM 12597 / MM 739), this protein is Glycine--tRNA ligase.